The primary structure comprises 225 residues: Cytochrome c oxidase subunit 2 (225 aa).

Topologically, residues 1-26 (MMTWSQMSFSDMNSPIMEQMVFFHDH) are mitochondrial intermembrane. The chain crosses the membrane as a helical span at residues 27-48 (SMMIILMITILTIYMITNIMMN). At 49–62 (NLLSRSMMEGQEIE) the chain is on the mitochondrial matrix side. A helical transmembrane segment spans residues 63–82 (IIWTIIPAITLIFIAIPSLH). Residues 83 to 225 (LLYLTDETFN…KNFINFINSS (143 aa)) are Mitochondrial intermembrane-facing. Positions 160, 195, 197, 199, 203, and 206 each coordinate Cu cation. Mg(2+) is bound at residue E197.

The protein belongs to the cytochrome c oxidase subunit 2 family. Component of the cytochrome c oxidase (complex IV, CIV), a multisubunit enzyme composed of a catalytic core of 3 subunits and several supernumerary subunits. The complex exists as a monomer or a dimer and forms supercomplexes (SCs) in the inner mitochondrial membrane with ubiquinol-cytochrome c oxidoreductase (cytochrome b-c1 complex, complex III, CIII). Cu cation is required as a cofactor.

It is found in the mitochondrion inner membrane. The catalysed reaction is 4 Fe(II)-[cytochrome c] + O2 + 8 H(+)(in) = 4 Fe(III)-[cytochrome c] + 2 H2O + 4 H(+)(out). Functionally, component of the cytochrome c oxidase, the last enzyme in the mitochondrial electron transport chain which drives oxidative phosphorylation. The respiratory chain contains 3 multisubunit complexes succinate dehydrogenase (complex II, CII), ubiquinol-cytochrome c oxidoreductase (cytochrome b-c1 complex, complex III, CIII) and cytochrome c oxidase (complex IV, CIV), that cooperate to transfer electrons derived from NADH and succinate to molecular oxygen, creating an electrochemical gradient over the inner membrane that drives transmembrane transport and the ATP synthase. Cytochrome c oxidase is the component of the respiratory chain that catalyzes the reduction of oxygen to water. Electrons originating from reduced cytochrome c in the intermembrane space (IMS) are transferred via the dinuclear copper A center (CU(A)) of subunit 2 and heme A of subunit 1 to the active site in subunit 1, a binuclear center (BNC) formed by heme A3 and copper B (CU(B)). The BNC reduces molecular oxygen to 2 water molecules using 4 electrons from cytochrome c in the IMS and 4 protons from the mitochondrial matrix. This Rhipicephalus sanguineus (Brown dog tick) protein is Cytochrome c oxidase subunit 2 (COII).